Here is a 620-residue protein sequence, read N- to C-terminus: Chaperone protein HscA homolog (620 aa).

This sequence belongs to the heat shock protein 70 family.

In terms of biological role, chaperone involved in the maturation of iron-sulfur cluster-containing proteins. Has a low intrinsic ATPase activity which is markedly stimulated by HscB. This chain is Chaperone protein HscA homolog, found in Shewanella loihica (strain ATCC BAA-1088 / PV-4).